Reading from the N-terminus, the 310-residue chain is Melanocyte-stimulating hormone receptor (310 aa).

Topologically, residues 1–37 (MPMQGAQRKLLGSLNSTPTATSNLGLAANRTGAPCLE) are extracellular. N29 carries an N-linked (GlcNAc...) asparagine glycan. A helical transmembrane segment spans residues 38–63 (LPIPDGLFLSLGLVSLVENVLVVAAI). Over 64–72 (AKNRNLHSS) the chain is Cytoplasmic. The helical transmembrane segment at 73-93 (MYCFICCLALSDLLVSGSNML) threads the bilayer. At 94-110 (EAGVLATRASVVQQLHN) the chain is on the extracellular side. A helical transmembrane segment spans residues 111–132 (TIDVLTCSSMLCSLCFLGAIAV). The Cytoplasmic segment spans residues 133–155 (DRYISIFYALRYHSIMTLPRAQR). The helical transmembrane segment at 156–175 (AVAAIWVASVLSSTLFITYY) threads the bilayer. Residues 176–183 (DHAAVLLC) are Extracellular-facing. The helical transmembrane segment at 184–203 (LVVFFLAMLVLMAVLYVHML) threads the bilayer. The Cytoplasmic portion of the chain corresponds to 204-232 (AWACQHAQGIIRLHKRQPPAHKGFGLRGA). Residues 233-258 (ATLTILLGIFFLCWGPFFLRLTLVVF) form a helical membrane-spanning segment. The Extracellular segment spans residues 259–271 (CPQHLTCNCIFKN). The chain crosses the membrane as a helical span at residues 272 to 292 (FKVFLTLIICNTIIDPLIYAF). Topologically, residues 293–310 (RSQELRRTLKEVLGRGRW) are cytoplasmic.

This sequence belongs to the G-protein coupled receptor 1 family. As to quaternary structure, interacts with MGRN1, but does not undergo MGRN1-mediated ubiquitination; this interaction competes with GNAS-binding and thus inhibits agonist-induced cAMP production. Interacts with OPN3; the interaction results in a decrease in MC1R-mediated cAMP signaling and ultimately a decrease in melanin production in melanocytes.

It is found in the cell membrane. Its function is as follows. Receptor for MSH (alpha, beta and gamma) and ACTH. The activity of this receptor is mediated by G proteins which activate adenylate cyclase. Mediates melanogenesis, the production of eumelanin (black/brown) and phaeomelanin (red/yellow), via regulation of cAMP signaling in melanocytes. The chain is Melanocyte-stimulating hormone receptor (MC1R) from Leontopithecus chrysomelas (Golden-headed lion tamarin).